The sequence spans 146 residues: Hemoglobin cathodic subunit beta (146 aa).

Residues 2–146 (QWSSSERSTI…VVSALSRQYF (145 aa)) form the Globin domain. Residues histidine 63 and histidine 92 each coordinate heme b.

It belongs to the globin family. In terms of assembly, heterotetramer of two alpha chains and two beta chains. In terms of tissue distribution, red blood cells.

In terms of biological role, involved in oxygen transport from the gills to the various peripheral tissues. This Conger conger (Conger eel) protein is Hemoglobin cathodic subunit beta.